Reading from the N-terminus, the 139-residue chain is Large ribosomal subunit protein uL16 (139 aa).

This sequence belongs to the universal ribosomal protein uL16 family. As to quaternary structure, part of the 50S ribosomal subunit.

Binds 23S rRNA and is also seen to make contacts with the A and possibly P site tRNAs. This chain is Large ribosomal subunit protein uL16, found in Synechocystis sp. (strain ATCC 27184 / PCC 6803 / Kazusa).